Here is a 147-residue protein sequence, read N- to C-terminus: Ubiquitin-conjugating enzyme E2 4 (147 aa).

A UBC core domain is found at 1–147; the sequence is MALKRINREL…AREWTRKYAI (147 aa). Cysteine 85 (glycyl thioester intermediate) is an active-site residue.

This sequence belongs to the ubiquitin-conjugating enzyme family. In terms of assembly, interacts with the E1 ubiquitin-activating enzyme ptr3 and E3 ubiquitin-protein ligase pub2.

It catalyses the reaction S-ubiquitinyl-[E1 ubiquitin-activating enzyme]-L-cysteine + [E2 ubiquitin-conjugating enzyme]-L-cysteine = [E1 ubiquitin-activating enzyme]-L-cysteine + S-ubiquitinyl-[E2 ubiquitin-conjugating enzyme]-L-cysteine.. It functions in the pathway protein modification; protein ubiquitination. E2 ubiquitin-conjugating enzyme that catalyzes the covalent attachment of ubiquitin to other proteins. Mediates the selective degradation of short-lived and abnormal proteins. Mediates ubiquitination of pex5. This chain is Ubiquitin-conjugating enzyme E2 4 (ubc4), found in Schizosaccharomyces pombe (strain 972 / ATCC 24843) (Fission yeast).